Here is a 648-residue protein sequence, read N- to C-terminus: Exoribonuclease 2 (648 aa).

An RNB domain is found at 191 to 518; it reads RIDLTYLDFI…INHRLIKSII (328 aa). In terms of domain architecture, S1 motif spans 565–647; it reads KKKYQANIID…GNKKIIATMI (83 aa).

It belongs to the RNR ribonuclease family. RNase II subfamily.

It is found in the cytoplasm. The enzyme catalyses Exonucleolytic cleavage in the 3'- to 5'-direction to yield nucleoside 5'-phosphates.. Its function is as follows. Involved in mRNA degradation. Hydrolyzes single-stranded polyribonucleotides processively in the 3' to 5' direction. The chain is Exoribonuclease 2 from Buchnera aphidicola subsp. Cinara cedri (strain Cc).